A 317-amino-acid polypeptide reads, in one-letter code: Type II restriction enzyme NaeI (317 aa).

As to quaternary structure, homodimer.

It carries out the reaction Endonucleolytic cleavage of DNA to give specific double-stranded fragments with terminal 5'-phosphates.. In terms of biological role, an E and P subtype restriction enzyme that recognizes the double-stranded unmethylated sequence 5'-GCCGGC-3' and cleaves after C-3. In Lentzea aerocolonigenes (Lechevalieria aerocolonigenes), this protein is Type II restriction enzyme NaeI.